Reading from the N-terminus, the 196-residue chain is Transmembrane protein 52 (196 aa).

An N-terminal signal peptide occupies residues methionine 1–alanine 28. A helical membrane pass occupies residues leucine 47–alanine 67. A disordered region spans residues glutamate 162 to proline 196.

It is found in the membrane. The chain is Transmembrane protein 52 (Tmem52) from Mus musculus (Mouse).